Consider the following 84-residue polypeptide: Large ribosomal subunit protein bL27 (84 aa).

The interval 1–25 (MAHKKGQGSTQNNRDSAGRRLGVKK) is disordered.

The protein belongs to the bacterial ribosomal protein bL27 family.

This chain is Large ribosomal subunit protein bL27, found in Sulfurovum sp. (strain NBC37-1).